The chain runs to 202 residues: 3-isopropylmalate dehydratase small subunit (202 aa).

Belongs to the LeuD family. LeuD type 1 subfamily. In terms of assembly, heterodimer of LeuC and LeuD.

It carries out the reaction (2R,3S)-3-isopropylmalate = (2S)-2-isopropylmalate. The protein operates within amino-acid biosynthesis; L-leucine biosynthesis; L-leucine from 3-methyl-2-oxobutanoate: step 2/4. In terms of biological role, catalyzes the isomerization between 2-isopropylmalate and 3-isopropylmalate, via the formation of 2-isopropylmaleate. The protein is 3-isopropylmalate dehydratase small subunit of Novosphingobium aromaticivorans (strain ATCC 700278 / DSM 12444 / CCUG 56034 / CIP 105152 / NBRC 16084 / F199).